A 117-amino-acid polypeptide reads, in one-letter code: UPF0102 protein Clos_1471 (117 aa).

The protein belongs to the UPF0102 family.

The polypeptide is UPF0102 protein Clos_1471 (Alkaliphilus oremlandii (strain OhILAs) (Clostridium oremlandii (strain OhILAs))).